A 110-amino-acid polypeptide reads, in one-letter code: Large ribosomal subunit protein uL22 (110 aa).

It belongs to the universal ribosomal protein uL22 family. As to quaternary structure, part of the 50S ribosomal subunit.

Its function is as follows. This protein binds specifically to 23S rRNA; its binding is stimulated by other ribosomal proteins, e.g. L4, L17, and L20. It is important during the early stages of 50S assembly. It makes multiple contacts with different domains of the 23S rRNA in the assembled 50S subunit and ribosome. Functionally, the globular domain of the protein is located near the polypeptide exit tunnel on the outside of the subunit, while an extended beta-hairpin is found that lines the wall of the exit tunnel in the center of the 70S ribosome. The chain is Large ribosomal subunit protein uL22 from Ruthia magnifica subsp. Calyptogena magnifica.